The primary structure comprises 571 residues: Putative diflavin flavoprotein A 1 (571 aa).

The segment at 43–236 is zinc metallo-hydrolase; it reads ENGTTYNSFL…PPVQLVATGH (194 aa). Residues H92, E94, D96, H159, D178, and H236 each contribute to the Fe cation site. In terms of domain architecture, Flavodoxin-like spans 265–426; it reads VAIFYAANYG…DLDKALGRLS (162 aa). The flavodoxin-reductase-like stretch occupies residues 427-571; sequence GGLYIITAQK…VHHRKVGNHY (145 aa).

In the N-terminal section; belongs to the zinc metallo-hydrolase group 3 family. The protein in the C-terminal section; belongs to the flavodoxin reductase family. Fe cation serves as cofactor.

Mediates electron transfer from NADH to oxygen, reducing it to water. This modular protein has 3 redox cofactors, in other organisms the same activity requires 2 or 3 proteins. This Thermosynechococcus vestitus (strain NIES-2133 / IAM M-273 / BP-1) protein is Putative diflavin flavoprotein A 1 (dfa1).